We begin with the raw amino-acid sequence, 824 residues long: Molybdenum cofactor sulfurase (824 aa).

The residue at position 274 (Lys-274) is an N6-(pyridoxal phosphate)lysine. Cys-433 is an active-site residue. An MOSC domain is found at 655–822 (CSSSKYRSCT…LQVGQQVYPS (168 aa)).

The protein belongs to the class-V pyridoxal-phosphate-dependent aminotransferase family. MOCOS subfamily. Requires pyridoxal 5'-phosphate as cofactor.

It carries out the reaction Mo-molybdopterin + L-cysteine + AH2 = thio-Mo-molybdopterin + L-alanine + A + H2O. Its pathway is cofactor biosynthesis; molybdopterin biosynthesis. In terms of biological role, sulfurates the molybdenum cofactor. Sulfation of molybdenum is essential for xanthine dehydrogenase (XDH) and aldehyde oxidase (ADO) enzymes in which molybdenum cofactor is liganded by 1 oxygen and 1 sulfur atom in active form. The sequence is that of Molybdenum cofactor sulfurase (MCSU3) from Oryza sativa subsp. japonica (Rice).